A 454-amino-acid chain; its full sequence is Bifunctional protein GlmU (454 aa).

Positions 1-226 are pyrophosphorylase; sequence MALNVVILAA…AVEVEGANNR (226 aa). UDP-N-acetyl-alpha-D-glucosamine contacts are provided by residues 8-11, lysine 22, glutamine 73, 78-79, 100-102, glycine 137, glutamate 151, asparagine 166, and asparagine 224; these read LAAG, GT, and YGD. Aspartate 102 contributes to the Mg(2+) binding site. Asparagine 224 lines the Mg(2+) pocket. The tract at residues 227–247 is linker; the sequence is VQLAQLERAYQARAAEKLMLE. The N-acetyltransferase stretch occupies residues 248-454; that stretch reads GANLRDPARI…GWARPVKKAK (207 aa). UDP-N-acetyl-alpha-D-glucosamine contacts are provided by arginine 330 and lysine 348. The active-site Proton acceptor is the histidine 360. UDP-N-acetyl-alpha-D-glucosamine-binding residues include tyrosine 363 and asparagine 374. Acetyl-CoA contacts are provided by residues alanine 377, 383–384, serine 402, alanine 420, and arginine 437; that span reads NY.

This sequence in the N-terminal section; belongs to the N-acetylglucosamine-1-phosphate uridyltransferase family. It in the C-terminal section; belongs to the transferase hexapeptide repeat family. As to quaternary structure, homotrimer. Requires Mg(2+) as cofactor.

It is found in the cytoplasm. The catalysed reaction is alpha-D-glucosamine 1-phosphate + acetyl-CoA = N-acetyl-alpha-D-glucosamine 1-phosphate + CoA + H(+). It carries out the reaction N-acetyl-alpha-D-glucosamine 1-phosphate + UTP + H(+) = UDP-N-acetyl-alpha-D-glucosamine + diphosphate. The protein operates within nucleotide-sugar biosynthesis; UDP-N-acetyl-alpha-D-glucosamine biosynthesis; N-acetyl-alpha-D-glucosamine 1-phosphate from alpha-D-glucosamine 6-phosphate (route II): step 2/2. Its pathway is nucleotide-sugar biosynthesis; UDP-N-acetyl-alpha-D-glucosamine biosynthesis; UDP-N-acetyl-alpha-D-glucosamine from N-acetyl-alpha-D-glucosamine 1-phosphate: step 1/1. It participates in bacterial outer membrane biogenesis; LPS lipid A biosynthesis. Its function is as follows. Catalyzes the last two sequential reactions in the de novo biosynthetic pathway for UDP-N-acetylglucosamine (UDP-GlcNAc). The C-terminal domain catalyzes the transfer of acetyl group from acetyl coenzyme A to glucosamine-1-phosphate (GlcN-1-P) to produce N-acetylglucosamine-1-phosphate (GlcNAc-1-P), which is converted into UDP-GlcNAc by the transfer of uridine 5-monophosphate (from uridine 5-triphosphate), a reaction catalyzed by the N-terminal domain. The protein is Bifunctional protein GlmU of Shewanella piezotolerans (strain WP3 / JCM 13877).